The chain runs to 221 residues: U1 small nuclear ribonucleoprotein C (221 aa).

Residues 4–36 (YFCDYCDTYLTHDSPSVRKTHCNGRKHKENVRV) form a Matrin-type zinc finger. Residues 100-168 (SNPFPTSQAG…PPGAPTLPQP (69 aa)) form a disordered region. The span at 134–166 (APAPPRMPGPLLMTPPPGAAAPGMAPPGAPTLP) shows a compositional bias: pro residues.

This sequence belongs to the U1 small nuclear ribonucleoprotein C family. U1 snRNP is composed of the 7 core Sm proteins B/B', D1, D2, D3, E, F and G that assemble in a heptameric protein ring on the Sm site of the small nuclear RNA to form the core snRNP, and at least 3 U1 snRNP-specific proteins U1-70K, U1-A and U1-C. U1-C interacts with U1 snRNA and the 5' splice-site region of the pre-mRNA.

It is found in the nucleus. Its function is as follows. Component of the spliceosomal U1 snRNP, which is essential for recognition of the pre-mRNA 5' splice-site and the subsequent assembly of the spliceosome. U1-C is directly involved in initial 5' splice-site recognition for both constitutive and regulated alternative splicing. The interaction with the 5' splice-site seems to precede base-pairing between the pre-mRNA and the U1 snRNA. Stimulates commitment or early (E) complex formation by stabilizing the base pairing of the 5' end of the U1 snRNA and the 5' splice-site region. The sequence is that of U1 small nuclear ribonucleoprotein C from Branchiostoma floridae (Florida lancelet).